A 360-amino-acid chain; its full sequence is Phospho-N-acetylmuramoyl-pentapeptide-transferase (360 aa).

10 helical membrane-spanning segments follow: residues 25–45 (RGIL…PWMI), 73–93 (TMGG…WADL), 97–117 (YVWV…VDDY), 135–155 (FWQS…APSA), 170–190 (IPLG…SSNA), 199–219 (GLAI…CYLS), 236–256 (AGEL…FLWF), 263–283 (VFMG…MAVI), 288–308 (IVLF…VIQV), and 338–358 (VIVR…ATLK).

It belongs to the glycosyltransferase 4 family. MraY subfamily. Mg(2+) is required as a cofactor.

The protein localises to the cell inner membrane. It catalyses the reaction UDP-N-acetyl-alpha-D-muramoyl-L-alanyl-gamma-D-glutamyl-meso-2,6-diaminopimeloyl-D-alanyl-D-alanine + di-trans,octa-cis-undecaprenyl phosphate = di-trans,octa-cis-undecaprenyl diphospho-N-acetyl-alpha-D-muramoyl-L-alanyl-D-glutamyl-meso-2,6-diaminopimeloyl-D-alanyl-D-alanine + UMP. It functions in the pathway cell wall biogenesis; peptidoglycan biosynthesis. In terms of biological role, catalyzes the initial step of the lipid cycle reactions in the biosynthesis of the cell wall peptidoglycan: transfers peptidoglycan precursor phospho-MurNAc-pentapeptide from UDP-MurNAc-pentapeptide onto the lipid carrier undecaprenyl phosphate, yielding undecaprenyl-pyrophosphoryl-MurNAc-pentapeptide, known as lipid I. The polypeptide is Phospho-N-acetylmuramoyl-pentapeptide-transferase (Pseudomonas savastanoi pv. phaseolicola (strain 1448A / Race 6) (Pseudomonas syringae pv. phaseolicola (strain 1448A / Race 6))).